The following is a 127-amino-acid chain: Glycine cleavage system H protein (127 aa).

Positions 22 to 104 constitute a Lipoyl-binding domain; sequence EAVIGITQFA…YTDGWMVRVK (83 aa). Lys63 is subject to N6-lipoyllysine.

Belongs to the GcvH family. The glycine cleavage system is composed of four proteins: P, T, L and H. (R)-lipoate serves as cofactor.

In terms of biological role, the glycine cleavage system catalyzes the degradation of glycine. The H protein shuttles the methylamine group of glycine from the P protein to the T protein. This Nitratidesulfovibrio vulgaris (strain DSM 19637 / Miyazaki F) (Desulfovibrio vulgaris) protein is Glycine cleavage system H protein.